We begin with the raw amino-acid sequence, 899 residues long: MPLQSLVKALWNVLHEEESEGYPDLTELIAEVESYQQRYPKQNPTNSQKIRHILDEIYEKTPFNNTRRRILWLAVLKTVIPLLILDRQAVGEWWDQIFFPFLNSPTQLKPVFSDLKSILFYILIFHDEDEWGGDLRRECAEETITRLVDLYVSKAIENLGDVESQEQRNQTIECLVNVLVHYGIQRPKELSSCFCHHFLNPPTRIPILSVMVEVIRRQGPRLYEIPQTGFYDLVLKCAEFDTSPILLSYALSFILMILSHICNSLDDSLYRLFCIYLRFSMIDPTSGFPSSTASGNWEVFHDFMSTYASTTTSQTDSSYNDVHDIVGSSQPDYLESLDYSQLFSILYALYPINFLEFLRDPKLYASKHNFQIRYSFNQELLSTKSDGLLGRHLAHSNFLKYTAETELTDKSRWTRLDSIAVVALCNSLNAVGIAESVMDPFGGKLPTTYEETSSATGLLAYPNESHDIASEPFSISWPQNPSISGSVHSATTFDKAQLSNTEDSYDNISHGTSYSEGVSSIHMVKGERGSNNLELTSESLSSTNDTIRRLQRDLLFLQNELRFEKFVRQQHLQNIGKLHREHILDMAVESERQKLLLTNKRYKAQIELLNSEIDKHRSESQAALNRRVKWENDFNNKIKALREEKKAWKSEESELKSSIESLISQLESIRNSQIDIAFSKNQLELKLQLYETKLKEYEQHLSCVNISKKQVSSSSDTSFGNTKMDSSMILSNSEAVSDEQERELIESEKHRMKLESENLHLQANIELLKKDLEAINVVYEAKIFDLEKRLSSEANAPELHNPVNLNYDAQLSKISEIKENYDELLTRYRELEGKFLESQAEVEELKNFQKPLVDTGSSIHSSPGLQQSKFIIRNDSLHPKVGPPRRQSTDTSRSTFRQY.

Coiled-coil stretches lie at residues 540 to 706 (LSST…CVNI) and 737 to 847 (SDEQ…ELKN). The segment at 874–899 (NDSLHPKVGPPRRQSTDTSRSTFRQY) is disordered. Residues 889–899 (TDTSRSTFRQY) are compositionally biased toward polar residues.

In terms of assembly, interacts with tsc2.

It localises to the cytoplasm. Functionally, together with tsc2, required for uptake of various amino acids from the environment and for proper conjugation. Involved in induction of gene expression of permeases and genes required for meiosis upon nitrogen starvation. May act as a GTPase-activating protein (GAP) for the small GTPase rhb1. This is Tuberous sclerosis 1 protein homolog (tsc1) from Schizosaccharomyces pombe (strain 972 / ATCC 24843) (Fission yeast).